The chain runs to 907 residues: Protein translocase subunit SecA (907 aa).

ATP contacts are provided by residues Gln87, 105 to 109 (GEGKT), and Asp510. Cys892, Cys894, Cys903, and His904 together coordinate Zn(2+).

Belongs to the SecA family. As to quaternary structure, monomer and homodimer. Part of the essential Sec protein translocation apparatus which comprises SecA, SecYEG and auxiliary proteins SecDF-YajC and YidC. The cofactor is Zn(2+).

Its subcellular location is the cell inner membrane. It is found in the cytoplasm. The enzyme catalyses ATP + H2O + cellular proteinSide 1 = ADP + phosphate + cellular proteinSide 2.. Its function is as follows. Part of the Sec protein translocase complex. Interacts with the SecYEG preprotein conducting channel. Has a central role in coupling the hydrolysis of ATP to the transfer of proteins into and across the cell membrane, serving both as a receptor for the preprotein-SecB complex and as an ATP-driven molecular motor driving the stepwise translocation of polypeptide chains across the membrane. This chain is Protein translocase subunit SecA, found in Acinetobacter baumannii (strain ATCC 17978 / DSM 105126 / CIP 53.77 / LMG 1025 / NCDC KC755 / 5377).